The following is a 211-amino-acid chain: Envelope protein UL45 homolog (211 aa).

The Intravirion portion of the chain corresponds to 1–46; that stretch reads MMSPTPEDDRDLVVVRGRLRMMDNGAEHDRERRSYTAWPHLCCGCT. Residues 47–67 traverse the membrane as a helical; Signal-anchor for type II membrane protein segment; it reads IGIILTMFVIATTLLLASLFA. At 68-211 the chain is on the virion surface side; that stretch reads FSYMSLESGT…SSILSNAIMK (144 aa). Residues N96 and N133 are each glycosylated (N-linked (GlcNAc...) asparagine; by host).

This sequence belongs to the herpesviridae HHV-1 UL45 family.

It is found in the virion membrane. This chain is Envelope protein UL45 homolog (UL45H), found in Gallid herpesvirus 2 (strain Chicken/Md5/ATCC VR-987) (GaHV-2).